An 87-amino-acid chain; its full sequence is NAD(P)H-quinone oxidoreductase subunit O (87 aa).

Basic and acidic residues predominate over residues 1 to 10; the sequence is MSEQTGKVDD. Residues 1-23 are disordered; it reads MSEQTGKVDDSQSPPKVQKKLRK.

This sequence belongs to the complex I NdhO subunit family. As to quaternary structure, NDH-1 can be composed of about 15 different subunits; different subcomplexes with different compositions have been identified which probably have different functions.

It localises to the cellular thylakoid membrane. It catalyses the reaction a plastoquinone + NADH + (n+1) H(+)(in) = a plastoquinol + NAD(+) + n H(+)(out). The enzyme catalyses a plastoquinone + NADPH + (n+1) H(+)(in) = a plastoquinol + NADP(+) + n H(+)(out). NDH-1 shuttles electrons from an unknown electron donor, via FMN and iron-sulfur (Fe-S) centers, to quinones in the respiratory and/or the photosynthetic chain. The immediate electron acceptor for the enzyme in this species is believed to be plastoquinone. Couples the redox reaction to proton translocation, and thus conserves the redox energy in a proton gradient. Cyanobacterial NDH-1 also plays a role in inorganic carbon-concentration. The polypeptide is NAD(P)H-quinone oxidoreductase subunit O (Prochlorococcus marinus (strain NATL2A)).